The chain runs to 283 residues: MQKKIETVQTLLEALPFIKEFRGKTVVIKYGGSAQETPQLKEKFAEDILLMYLVGIKPVIVHGGGRQINEMLDALKIESKFIEGQRVTSKEVMRIVEMVLSGEINKEIVSLLNSHGAKAIGISGKDAHFISAKAKDFSRWGLTGNITDVKADVISNLIAEKFIPVIAPIAAGGEMGHPGFNINADLCASYVAKAIGAHKIIFLTDTAGVLNNSKELFSTLTKAEVEALKADGTIHGGMVPKVDACLEAIEGGVAKAHIIDGRIEHSMLLELFTSAGVGTQITI.

Residues 64–65 (GG), R86, and N181 contribute to the substrate site.

The protein belongs to the acetylglutamate kinase family. ArgB subfamily.

It is found in the cytoplasm. The catalysed reaction is N-acetyl-L-glutamate + ATP = N-acetyl-L-glutamyl 5-phosphate + ADP. The protein operates within amino-acid biosynthesis; L-arginine biosynthesis; N(2)-acetyl-L-ornithine from L-glutamate: step 2/4. In terms of biological role, catalyzes the ATP-dependent phosphorylation of N-acetyl-L-glutamate. This Sulfurimonas denitrificans (strain ATCC 33889 / DSM 1251) (Thiomicrospira denitrificans (strain ATCC 33889 / DSM 1251)) protein is Acetylglutamate kinase.